The primary structure comprises 264 residues: Thymidylate synthase 2 (264 aa).

Arginine 21 lines the dUMP pocket. Histidine 51 is a binding site for (6R)-5,10-methylene-5,6,7,8-tetrahydrofolate. 126 to 127 (RR) serves as a coordination point for dUMP. Cysteine 146 acts as the Nucleophile in catalysis. DUMP-binding positions include 166-169 (RSAD), asparagine 177, and 207-209 (HIY). Aspartate 169 contacts (6R)-5,10-methylene-5,6,7,8-tetrahydrofolate. (6R)-5,10-methylene-5,6,7,8-tetrahydrofolate is bound at residue serine 263.

Belongs to the thymidylate synthase family. Bacterial-type ThyA subfamily. Homodimer.

The protein localises to the cytoplasm. It carries out the reaction dUMP + (6R)-5,10-methylene-5,6,7,8-tetrahydrofolate = 7,8-dihydrofolate + dTMP. It functions in the pathway pyrimidine metabolism; dTTP biosynthesis. In terms of biological role, catalyzes the reductive methylation of 2'-deoxyuridine-5'-monophosphate (dUMP) to 2'-deoxythymidine-5'-monophosphate (dTMP) while utilizing 5,10-methylenetetrahydrofolate (mTHF) as the methyl donor and reductant in the reaction, yielding dihydrofolate (DHF) as a by-product. This enzymatic reaction provides an intracellular de novo source of dTMP, an essential precursor for DNA biosynthesis. In Bacillus subtilis (strain 168), this protein is Thymidylate synthase 2.